A 150-amino-acid polypeptide reads, in one-letter code: D-aminoacyl-tRNA deacylase (150 aa).

The short motif at 138 to 139 is the Gly-cisPro motif, important for rejection of L-amino acids element; sequence GP.

The protein belongs to the DTD family. Homodimer.

Its subcellular location is the cytoplasm. The enzyme catalyses glycyl-tRNA(Ala) + H2O = tRNA(Ala) + glycine + H(+). The catalysed reaction is a D-aminoacyl-tRNA + H2O = a tRNA + a D-alpha-amino acid + H(+). Functionally, an aminoacyl-tRNA editing enzyme that deacylates mischarged D-aminoacyl-tRNAs. Also deacylates mischarged glycyl-tRNA(Ala), protecting cells against glycine mischarging by AlaRS. Acts via tRNA-based rather than protein-based catalysis; rejects L-amino acids rather than detecting D-amino acids in the active site. By recycling D-aminoacyl-tRNA to D-amino acids and free tRNA molecules, this enzyme counteracts the toxicity associated with the formation of D-aminoacyl-tRNA entities in vivo and helps enforce protein L-homochirality. In Salinibacter ruber (strain DSM 13855 / M31), this protein is D-aminoacyl-tRNA deacylase.